The following is a 495-amino-acid chain: Autoinducer 2 import ATP-binding protein LsrA (495 aa).

ABC transporter domains are found at residues 5-233 (IEAH…TPVS) and 256-494 (AQDF…FGGQ). 37 to 44 (GGNGAGKS) provides a ligand contact to ATP.

The protein belongs to the ABC transporter superfamily. AI-2 autoinducer porter (TC 3.A.1.2.8) family. As to quaternary structure, the complex is composed of two ATP-binding proteins (LsrA), two transmembrane proteins (LsrC and LsrD) and a solute-binding protein (LsrB).

It is found in the cell inner membrane. It carries out the reaction ATP + H2O + (2R,4S)-2-methyl-2,3,3,4-tetrahydroxytetrahydrofuran-[AI-2-binding protein]Side 1 = ADP + phosphate + (2R,4S)-2-methyl-2,3,3,4-tetrahydroxytetrahydrofuranSide 2 + [AI-2-binding protein]Side 1.. Part of the ABC transporter complex LsrABCD involved in autoinducer 2 (AI-2) import. Responsible for energy coupling to the transport system. This Enterobacter sp. (strain 638) protein is Autoinducer 2 import ATP-binding protein LsrA (lsrA).